Here is a 238-residue protein sequence, read N- to C-terminus: Exosome complex exonuclease RRP46 homolog (238 aa).

Positions 174–194 are disordered; it reads SRKSASSKEPNQKEEDSERGL. The span at 183–192 shows a compositional bias: basic and acidic residues; it reads PNQKEEDSER.

It belongs to the RNase PH family. As to quaternary structure, homodimer or monomer when reduced or oxidized, respectively. Component of the exosome core complex.

It is found in the nucleus. Its subcellular location is the nucleolus. In terms of biological role, probable component of the exosome 3'-&gt;5' exoribonuclease complex, a complex that degrades inherently unstable mRNAs containing AU-rich elements (AREs) within their 3'-untranslated regions. May form a homodimer separately from exosome complexes and function in DNA cleavage process. Binds double-stranded DNA (dsDNA) and single-stranded RNA (ssRNA), and possesses hydrolytic DNase and phosphorolytic RNase activities in vitro. The chain is Exosome complex exonuclease RRP46 homolog (RRP46) from Oryza sativa subsp. japonica (Rice).